Here is a 190-residue protein sequence, read N- to C-terminus: RNA pyrophosphohydrolase (190 aa).

In terms of domain architecture, Nudix hydrolase spans 6–149 (GYRPNVGIVL…KRGVYARALC (144 aa)). The Nudix box signature appears at 38–59 (GGMHSDETPVEAMYRELNEEIG).

The protein belongs to the Nudix hydrolase family. RppH subfamily. A divalent metal cation serves as cofactor.

Accelerates the degradation of transcripts by removing pyrophosphate from the 5'-end of triphosphorylated RNA, leading to a more labile monophosphorylated state that can stimulate subsequent ribonuclease cleavage. The polypeptide is RNA pyrophosphohydrolase (Xylella fastidiosa (strain M12)).